We begin with the raw amino-acid sequence, 304 residues long: Aspartate carbamoyltransferase catalytic subunit (304 aa).

Residues R57 and T58 each coordinate carbamoyl phosphate. K86 is an L-aspartate binding site. The carbamoyl phosphate site is built by R107, H135, and Q138. Residues R168 and R229 each coordinate L-aspartate. The carbamoyl phosphate site is built by L266 and P267.

This sequence belongs to the aspartate/ornithine carbamoyltransferase superfamily. ATCase family. As to quaternary structure, heterooligomer of catalytic and regulatory chains.

It catalyses the reaction carbamoyl phosphate + L-aspartate = N-carbamoyl-L-aspartate + phosphate + H(+). Its pathway is pyrimidine metabolism; UMP biosynthesis via de novo pathway; (S)-dihydroorotate from bicarbonate: step 2/3. Its function is as follows. Catalyzes the condensation of carbamoyl phosphate and aspartate to form carbamoyl aspartate and inorganic phosphate, the committed step in the de novo pyrimidine nucleotide biosynthesis pathway. This Methanosphaera stadtmanae (strain ATCC 43021 / DSM 3091 / JCM 11832 / MCB-3) protein is Aspartate carbamoyltransferase catalytic subunit.